The chain runs to 224 residues: Protein PLANT CADMIUM RESISTANCE 6 (224 aa).

The chain crosses the membrane as a helical span at residues 131–151 (GMLYGLICCLFAIPCVYTCTF).

The protein belongs to the cornifelin family.

The protein resides in the membrane. May be involved in heavy metals transport. This chain is Protein PLANT CADMIUM RESISTANCE 6 (PCR6), found in Arabidopsis thaliana (Mouse-ear cress).